The sequence spans 346 residues: Inositol 2-dehydrogenase/D-chiro-inositol 3-dehydrogenase (346 aa).

Belongs to the Gfo/Idh/MocA family. Homotetramer.

It carries out the reaction myo-inositol + NAD(+) = scyllo-inosose + NADH + H(+). The enzyme catalyses 1D-chiro-inositol + NAD(+) = scyllo-inosine + NADH + H(+). The protein operates within polyol metabolism; myo-inositol degradation into acetyl-CoA; acetyl-CoA from myo-inositol: step 1/7. Its function is as follows. Involved in the oxidation of myo-inositol (MI) and D-chiro-inositol (DCI) to 2-keto-myo-inositol (2KMI or 2-inosose) and 1-keto-D-chiro-inositol (1KDCI), respectively. This is Inositol 2-dehydrogenase/D-chiro-inositol 3-dehydrogenase from Lacticaseibacillus casei (Lactobacillus casei).